We begin with the raw amino-acid sequence, 646 residues long: Interferon-induced GTP-binding protein MxA (646 aa).

In terms of domain architecture, Dynamin-type G spans 34–307 (DLALPAIAVI…LVHHIQKSLP (274 aa)). Residues 44–51 (GDQSSGKS) form a G1 motif region. 44-51 (GDQSSGKS) lines the GTP pocket. A G2 motif region spans residues 69–71 (VTR). The G3 motif stretch occupies residues 145–148 (DLPG). Residues 145–149 (DLPGI) and 214–217 (TKPD) each bind GTP. A G4 motif region spans residues 214–217 (TKPD). Positions 246 to 249 (RCRG) are G5 motif. A GED domain is found at 546-637 (LREMRLHLKS…PLGHLLEVTF (92 aa)).

It belongs to the TRAFAC class dynamin-like GTPase superfamily. Dynamin/Fzo/YdjA family.

It is found in the cytoplasm. In Danio rerio (Zebrafish), this protein is Interferon-induced GTP-binding protein MxA (mxa).